Reading from the N-terminus, the 379-residue chain is tRNA (guanine(26)-N(2))-dimethyltransferase (379 aa).

Positions 4–375 (VEVLEGKAKI…APYEVFVNVL (372 aa)) constitute a Trm1 methyltransferase domain. Arg36, Arg61, Asp78, Asp120, and Ala121 together coordinate S-adenosyl-L-methionine.

The protein belongs to the class I-like SAM-binding methyltransferase superfamily. Trm1 family.

The enzyme catalyses guanosine(26) in tRNA + 2 S-adenosyl-L-methionine = N(2)-dimethylguanosine(26) in tRNA + 2 S-adenosyl-L-homocysteine + 2 H(+). Dimethylates a single guanine residue at position 26 of a number of tRNAs using S-adenosyl-L-methionine as donor of the methyl groups. The protein is tRNA (guanine(26)-N(2))-dimethyltransferase of Pyrococcus abyssi (strain GE5 / Orsay).